The primary structure comprises 382 residues: Alkanesulfonate monooxygenase (382 aa).

Belongs to the SsuD family.

It carries out the reaction an alkanesulfonate + FMNH2 + O2 = an aldehyde + FMN + sulfite + H2O + 2 H(+). Catalyzes the desulfonation of aliphatic sulfonates. In Pseudomonas entomophila (strain L48), this protein is Alkanesulfonate monooxygenase.